A 155-amino-acid polypeptide reads, in one-letter code: Protein phosphatase 1 regulatory subunit 17 (155 aa).

The disordered stretch occupies residues 41–73 (KKKPRKGKNVQATLNVESDQKKPRRKDTPALHI). The span at 58 to 69 (SDQKKPRRKDTP) shows a compositional bias: basic and acidic residues. Phosphothreonine; by PKG/PRKG1 occurs at positions 68 and 119.

In terms of processing, substrate for cGMP-dependent protein kinase. Phosphorylated by PRKG1 isoform alpha. Phosphorylation of Thr-68 and Thr-119 is required for its phosphatase activity. Post-translationally, substrate for cGMP-dependent protein kinase. Highly expressed in cerebellum.

In terms of biological role, inhibits phosphatase activities of protein phosphatase 1 (PP1) and protein phosphatase 2A (PP2A) complexes. In Homo sapiens (Human), this protein is Protein phosphatase 1 regulatory subunit 17 (PPP1R17).